A 907-amino-acid chain; its full sequence is MDVQAEDLFRDVESDAFVNESHGGTGFQQNFSAWPGAFQVAWPLTNHQDLASETQDNGNKSGGDEIDVSLCDSQQQGRSRTSSLVNGLLTELYDTYRGGAGCYYFRQQDSVDSSTEASGSDAFLSRSNPESGFLQELSERQSSRHQMLYLKQKDCSELKAIKDELNRRIAIQSAKLLRQVKQKDRLQHKVQKNCDIVTACLQAVSQKRRVDTKLKFTLEPSLGQNGFQQWYDALKAVARLPTGIPKEWRKRVWLTLADHYLHSISIDWDKTMRFTFNDRSNPDDDSMGIQIVKDLHRTGCSSYCGQEAEQDRVVLKRVLLAYARWNKTIGYCQGFNILAALILEVMEGNEGDALKVMIYLIDKVLPDSYFANNLRALSVDMAVFRDLVRMKLPELSQHLDVLQRTANKESGGGYEPPLTNVFTMQWFLTLFATCLPNHTVLKIWDSVFFEGSEILLRVSLAIWAKLGEQIECCQNSDDFYSTMGRLTQEMLEDSLIDSNELMQTVYSMAQFPFPQLAELREKYTYNITPFPAPVKSASFSGRTSKMRDSDEENEIDEDDVNANAVGCLGPFSGFLAPELQKYQKQIKDQKEEQSLKASNIAELSPGAIDSCRSEYHAVFNSMMMERMTTDINALKQQYSRIKKRQLQQINQVYIAADKGPVSCILPSQVNNSPVINHLLLGKKLKQVNRSKNALHLPASKSSLLANEETKAKQNSPWRTHIRVHRKNIARAKGELGHGDTIGLIDEQNEVPKDQPDTSKETEETAQPPCSSAGEETSLDRTVMKVDGRSPEPVYQDENANVTVVQSKLEALELSPDAETEVSLEMSQTFQESQSDSHSSSSESESFKKSPKVQVFSPFPSVKPLKKSATARNLGLYGPNSRTPSVNFPHMSKTFNKAANGTTGSKKR.

The tract at residues 51-74 (ASETQDNGNKSGGDEIDVSLCDSQ) is disordered. A Rab-GAP TBC domain is found at 243 to 451 (GIPKEWRKRV…KIWDSVFFEG (209 aa)). Residues 583–645 (QKQIKDQKEE…QQYSRIKKRQ (63 aa)) adopt a coiled-coil conformation. Disordered stretches follow at residues 731 to 781 (AKGE…LDRT), 812 to 859 (ELSP…SPFP), and 872 to 907 (NLGL…SKKR). Residues 749-762 (EVPKDQPDTSKETE) show a composition bias toward basic and acidic residues. Residues 831–843 (ESQSDSHSSSSES) are compositionally biased toward low complexity. Over residues 892-907 (KTFNKAANGTTGSKKR) the composition is skewed to polar residues.

In terms of biological role, may act as a GTPase-activating protein for Rab family protein(s). The sequence is that of TBC1 domain family member 30 (tbc1d30) from Xenopus tropicalis (Western clawed frog).